Reading from the N-terminus, the 397-residue chain is L-asparaginase-like protein GD25160 (397 aa).

Positions Met1–Ser22 are cleaved as a signal peptide. Cystine bridges form between Cys90–Cys95, Cys189–Cys205, and Cys344–Cys371.

The protein belongs to the Ntn-hydrolase family.

This is L-asparaginase-like protein GD25160 from Drosophila simulans (Fruit fly).